The primary structure comprises 275 residues: Large ribosomal subunit protein uL2c (275 aa).

Disordered stretches follow at residues 36 to 56 and 224 to 275; these read KNHRRQGRNSRGIITSRHRGK and VMNP…RKRK. Over residues 255 to 275 the composition is skewed to basic residues; sequence LGRKTRKKPKYSNRYILRKRK.

This sequence belongs to the universal ribosomal protein uL2 family. Part of the 50S ribosomal subunit.

The protein resides in the plastid. It is found in the chloroplast. This chain is Large ribosomal subunit protein uL2c (rpl2), found in Gracilaria tenuistipitata var. liui (Red alga).